A 103-amino-acid chain; its full sequence is c-Myc-binding protein (103 aa).

Belongs to the AMY1 family. As to quaternary structure, binds via its C-terminal region to the N-terminal region of MYC. Associates with AKAP1/S-AKAP84. Interacts with MYCBPAP. Interacts with CFAP91.

Its subcellular location is the cytoplasm. The protein localises to the nucleus. May control the transcriptional activity of MYC. Stimulates the activation of E box-dependent transcription by MYC. This Mus musculus (Mouse) protein is c-Myc-binding protein (Mycbp).